A 149-amino-acid polypeptide reads, in one-letter code: Transcriptional repressor NrdR (149 aa).

A zinc finger spans residues 3–34 (CPFCSENDTKVIDSRLVADGHQVRRRRQCLAC). Positions 49–139 (PKVIKSNGNR…VYRSFEDIRE (91 aa)) constitute an ATP-cone domain.

Belongs to the NrdR family. Zn(2+) serves as cofactor.

In terms of biological role, negatively regulates transcription of bacterial ribonucleotide reductase nrd genes and operons by binding to NrdR-boxes. This is Transcriptional repressor NrdR from Vibrio atlanticus (strain LGP32) (Vibrio splendidus (strain Mel32)).